The sequence spans 469 residues: 3-isopropylmalate dehydratase large subunit (469 aa).

Cys350, Cys410, and Cys413 together coordinate [4Fe-4S] cluster.

Belongs to the aconitase/IPM isomerase family. LeuC type 1 subfamily. In terms of assembly, heterodimer of LeuC and LeuD. It depends on [4Fe-4S] cluster as a cofactor.

The catalysed reaction is (2R,3S)-3-isopropylmalate = (2S)-2-isopropylmalate. It functions in the pathway amino-acid biosynthesis; L-leucine biosynthesis; L-leucine from 3-methyl-2-oxobutanoate: step 2/4. Catalyzes the isomerization between 2-isopropylmalate and 3-isopropylmalate, via the formation of 2-isopropylmaleate. In Rhodopseudomonas palustris (strain ATCC BAA-98 / CGA009), this protein is 3-isopropylmalate dehydratase large subunit.